A 1153-amino-acid chain; its full sequence is Error-prone DNA polymerase (1153 aa).

Disordered regions lie at residues 1-39 (MFYSCCVSIEPRDPASEPTPTPRRPLRKSQPRSFSQAQP) and 64-89 (VGEGQRRTTSLDPAEAEGTGAEGASQ).

The protein belongs to the DNA polymerase type-C family. DnaE2 subfamily.

It localises to the cytoplasm. It carries out the reaction DNA(n) + a 2'-deoxyribonucleoside 5'-triphosphate = DNA(n+1) + diphosphate. Functionally, DNA polymerase involved in damage-induced mutagenesis and translesion synthesis (TLS). It is not the major replicative DNA polymerase. The chain is Error-prone DNA polymerase from Corynebacterium jeikeium (strain K411).